We begin with the raw amino-acid sequence, 93 residues long: Small ribosomal subunit protein bS18 (93 aa).

Belongs to the bacterial ribosomal protein bS18 family. As to quaternary structure, part of the 30S ribosomal subunit. Forms a tight heterodimer with protein bS6.

Its function is as follows. Binds as a heterodimer with protein bS6 to the central domain of the 16S rRNA, where it helps stabilize the platform of the 30S subunit. This Delftia acidovorans (strain DSM 14801 / SPH-1) protein is Small ribosomal subunit protein bS18.